The sequence spans 212 residues: MAKTALTPPASGSEVPRSGTPGDASGNKPQTDATGVSATDTASQKRGRGRPPKAKSDSSQIGAVSAKASTKPSGRPKRNVAQAVPSTSVAAAVKKRGRAKRSTVTAAVVTTATGEGSRKRGRPKKDDVAAATVPAETVVAPAKRRGRKPTVEVAAQPVRRTRKSTSVAPVAANVGDLKKRTALLQKKVKEAAAKLKQAVTAIDEVQKLADGM.

Residues 1–130 form a disordered region; it reads MAKTALTPPA…GRPKKDDVAA (130 aa). Residues 27–44 show a composition bias toward polar residues; sequence NKPQTDATGVSATDTASQ. 3 consecutive DNA-binding regions (a.T hook) follow at residues 45–56, 70–79, and 94–98; these read KRGRGRPPKAKS, TKPSGRPKRN, and KKRGR. A compositionally biased stretch (polar residues) spans 57 to 72; that stretch reads DSSQIGAVSAKASTKP. Residues 103-113 show a composition bias toward low complexity; sequence TVTAAVVTTAT. A DNA-binding region (a.T hook 4) is located at residues 118–127; sequence RKRGRPKKDD. Residues 176–210 are a coiled coil; sequence DLKKRTALLQKKVKEAAAKLKQAVTAIDEVQKLAD.

It localises to the nucleus. In terms of biological role, may bind DNA. The chain is Putative DNA-binding protein At1g48610 from Arabidopsis thaliana (Mouse-ear cress).